A 239-amino-acid polypeptide reads, in one-letter code: Small ribosomal subunit protein uS2 (239 aa).

Belongs to the universal ribosomal protein uS2 family.

The protein is Small ribosomal subunit protein uS2 of Histophilus somni (strain 129Pt) (Haemophilus somnus).